Here is a 142-residue protein sequence, read N- to C-terminus: HTH-type transcriptional regulator MntR (142 aa).

One can recognise an HTH dtxR-type domain in the interval 1 to 63; that stretch reads MPTPSMEDYI…YEKYRGLILT (63 aa). Mn(2+) is bound by residues aspartate 8, glutamate 11, histidine 77, glutamate 99, glutamate 102, and histidine 103.

Belongs to the DtxR/MntR family. In terms of assembly, homodimer.

The protein localises to the cytoplasm. With respect to regulation, DNA binding is strongly activated by Mn(2+). In terms of biological role, central regulator of manganese homeostasis. The protein is HTH-type transcriptional regulator MntR of Listeria innocua serovar 6a (strain ATCC BAA-680 / CLIP 11262).